A 147-amino-acid polypeptide reads, in one-letter code: Large ribosomal subunit protein uL13 (147 aa).

It belongs to the universal ribosomal protein uL13 family. Part of the 50S ribosomal subunit.

In terms of biological role, this protein is one of the early assembly proteins of the 50S ribosomal subunit, although it is not seen to bind rRNA by itself. It is important during the early stages of 50S assembly. This is Large ribosomal subunit protein uL13 from Nocardioides sp. (strain ATCC BAA-499 / JS614).